A 706-amino-acid polypeptide reads, in one-letter code: Polyribonucleotide nucleotidyltransferase (706 aa).

Residues Asp486 and Asp492 each contribute to the Mg(2+) site. The 60-residue stretch at 552 to 611 folds into the KH domain; the sequence is PRIIAMKINPEKIRDVIGKGGAVIRALTEETGTQIDIQEDGSVKIACTSMEAGELAKKRI. Positions 621–689 constitute an S1 motif domain; it reads GKVYEGPVIK…EKGRLRLSMK (69 aa).

It belongs to the polyribonucleotide nucleotidyltransferase family. The cofactor is Mg(2+).

It localises to the cytoplasm. The catalysed reaction is RNA(n+1) + phosphate = RNA(n) + a ribonucleoside 5'-diphosphate. Its function is as follows. Involved in mRNA degradation. Catalyzes the phosphorolysis of single-stranded polyribonucleotides processively in the 3'- to 5'-direction. The protein is Polyribonucleotide nucleotidyltransferase of Thiobacillus denitrificans (strain ATCC 25259 / T1).